A 296-amino-acid chain; its full sequence is Nucleotide-binding protein SMU_1306c (296 aa).

13-20 (GMSGAGKT) provides a ligand contact to ATP. GTP is bound at residue 63–66 (DMRS).

The protein belongs to the RapZ-like family.

In terms of biological role, displays ATPase and GTPase activities. This Streptococcus mutans serotype c (strain ATCC 700610 / UA159) protein is Nucleotide-binding protein SMU_1306c.